Reading from the N-terminus, the 29-residue chain is Cytochrome b6-f complex subunit 8 (29 aa).

The chain crosses the membrane as a helical span at residues 3-23 (IVSIGWAALMVVFTFSLSLVV).

The protein belongs to the PetN family. As to quaternary structure, the 4 large subunits of the cytochrome b6-f complex are cytochrome b6, subunit IV (17 kDa polypeptide, PetD), cytochrome f and the Rieske protein, while the 4 small subunits are PetG, PetL, PetM and PetN. The complex functions as a dimer.

Its subcellular location is the plastid. The protein resides in the chloroplast thylakoid membrane. Its function is as follows. Component of the cytochrome b6-f complex, which mediates electron transfer between photosystem II (PSII) and photosystem I (PSI), cyclic electron flow around PSI, and state transitions. The sequence is that of Cytochrome b6-f complex subunit 8 from Zygnema circumcarinatum (Green alga).